The chain runs to 238 residues: Small ribosomal subunit protein uS2 (238 aa).

Belongs to the universal ribosomal protein uS2 family.

In Prochlorococcus marinus (strain SARG / CCMP1375 / SS120), this protein is Small ribosomal subunit protein uS2.